A 427-amino-acid polypeptide reads, in one-letter code: Tol-Pal system protein TolB (427 aa).

Positions 1–25 are cleaved as a signal peptide; the sequence is MKTFAQLRLLLAAAALALLSFSAQA.

This sequence belongs to the TolB family. The Tol-Pal system is composed of five core proteins: the inner membrane proteins TolA, TolQ and TolR, the periplasmic protein TolB and the outer membrane protein Pal. They form a network linking the inner and outer membranes and the peptidoglycan layer.

The protein resides in the periplasm. Functionally, part of the Tol-Pal system, which plays a role in outer membrane invagination during cell division and is important for maintaining outer membrane integrity. The chain is Tol-Pal system protein TolB from Azoarcus sp. (strain BH72).